The primary structure comprises 158 residues: 6,7-dimethyl-8-ribityllumazine synthase (158 aa).

5-amino-6-(D-ribitylamino)uracil contacts are provided by residues Phe22, 57–59 (SYE), and 81–83 (TVI). His89 (proton donor) is an active-site residue. Phe114 lines the 5-amino-6-(D-ribitylamino)uracil pocket. A (2S)-2-hydroxy-3-oxobutyl phosphate-binding site is contributed by Arg128.

This sequence belongs to the DMRL synthase family. Forms an icosahedral capsid composed of 60 subunits, arranged as a dodecamer of pentamers.

The enzyme catalyses (2S)-2-hydroxy-3-oxobutyl phosphate + 5-amino-6-(D-ribitylamino)uracil = 6,7-dimethyl-8-(1-D-ribityl)lumazine + phosphate + 2 H2O + H(+). The protein operates within cofactor biosynthesis; riboflavin biosynthesis; riboflavin from 2-hydroxy-3-oxobutyl phosphate and 5-amino-6-(D-ribitylamino)uracil: step 1/2. Functionally, catalyzes the formation of 6,7-dimethyl-8-ribityllumazine by condensation of 5-amino-6-(D-ribitylamino)uracil with 3,4-dihydroxy-2-butanone 4-phosphate. This is the penultimate step in the biosynthesis of riboflavin. This chain is 6,7-dimethyl-8-ribityllumazine synthase, found in Blochmanniella pennsylvanica (strain BPEN).